The sequence spans 144 residues: uncharacterized protein (144 aa).

This is an uncharacterized protein from Saccharomyces cerevisiae (strain ATCC 204508 / S288c) (Baker's yeast).